A 282-amino-acid polypeptide reads, in one-letter code: Restriction of telomere capping protein 4 (282 aa).

2 stretches are compositionally biased toward basic and acidic residues: residues 22–43 and 60–70; these read LDFL…EDNQ and DDSHVSLRQSV. The interval 22-70 is disordered; it reads LDFLKRRRIEDSSSSSDHEDNQRGSLSSSSSSEEDSDRDDSHVSLRQSV.

The protein belongs to the RTC4 family.

Its subcellular location is the cytoplasm. The protein resides in the nucleus. Its function is as follows. May be involved in a process influencing telomere capping. This Zygosaccharomyces rouxii (strain ATCC 2623 / CBS 732 / NBRC 1130 / NCYC 568 / NRRL Y-229) protein is Restriction of telomere capping protein 4 (RTC4).